Here is a 583-residue protein sequence, read N- to C-terminus: 2-succinyl-5-enolpyruvyl-6-hydroxy-3-cyclohexene-1-carboxylate synthase (583 aa).

It belongs to the TPP enzyme family. MenD subfamily. In terms of assembly, homodimer. Requires Mg(2+) as cofactor. Mn(2+) serves as cofactor. The cofactor is thiamine diphosphate.

It carries out the reaction isochorismate + 2-oxoglutarate + H(+) = 5-enolpyruvoyl-6-hydroxy-2-succinyl-cyclohex-3-ene-1-carboxylate + CO2. It functions in the pathway quinol/quinone metabolism; 1,4-dihydroxy-2-naphthoate biosynthesis; 1,4-dihydroxy-2-naphthoate from chorismate: step 2/7. The protein operates within quinol/quinone metabolism; menaquinone biosynthesis. Functionally, catalyzes the thiamine diphosphate-dependent decarboxylation of 2-oxoglutarate and the subsequent addition of the resulting succinic semialdehyde-thiamine pyrophosphate anion to isochorismate to yield 2-succinyl-5-enolpyruvyl-6-hydroxy-3-cyclohexene-1-carboxylate (SEPHCHC). The protein is 2-succinyl-5-enolpyruvyl-6-hydroxy-3-cyclohexene-1-carboxylate synthase of Roseiflexus sp. (strain RS-1).